The sequence spans 619 residues: Dihydroxy-acid dehydratase 1 (619 aa).

Residue Asp-81 coordinates Mg(2+). Cys-122 lines the [2Fe-2S] cluster pocket. Mg(2+)-binding residues include Asp-123 and Lys-124. N6-carboxylysine is present on Lys-124. Position 201 (Cys-201) interacts with [2Fe-2S] cluster. Residue Glu-496 coordinates Mg(2+). Ser-522 (proton acceptor) is an active-site residue.

It belongs to the IlvD/Edd family. In terms of assembly, homodimer. The cofactor is [2Fe-2S] cluster. Mg(2+) serves as cofactor.

The enzyme catalyses (2R)-2,3-dihydroxy-3-methylbutanoate = 3-methyl-2-oxobutanoate + H2O. The catalysed reaction is (2R,3R)-2,3-dihydroxy-3-methylpentanoate = (S)-3-methyl-2-oxopentanoate + H2O. Its pathway is amino-acid biosynthesis; L-isoleucine biosynthesis; L-isoleucine from 2-oxobutanoate: step 3/4. It participates in amino-acid biosynthesis; L-valine biosynthesis; L-valine from pyruvate: step 3/4. Its function is as follows. Functions in the biosynthesis of branched-chain amino acids. Catalyzes the dehydration of (2R,3R)-2,3-dihydroxy-3-methylpentanoate (2,3-dihydroxy-3-methylvalerate) into 2-oxo-3-methylpentanoate (2-oxo-3-methylvalerate) and of (2R)-2,3-dihydroxy-3-methylbutanoate (2,3-dihydroxyisovalerate) into 2-oxo-3-methylbutanoate (2-oxoisovalerate), the penultimate precursor to L-isoleucine and L-valine, respectively. The chain is Dihydroxy-acid dehydratase 1 from Burkholderia lata (strain ATCC 17760 / DSM 23089 / LMG 22485 / NCIMB 9086 / R18194 / 383).